A 573-amino-acid polypeptide reads, in one-letter code: Glutathione/L-cysteine transport system ATP-binding/permease protein CydC (573 aa).

Residues Met1 to Lys15 are Cytoplasmic-facing. The next 2 helical transmembrane spans lie at Trp16 to Leu36 and Thr37 to Phe57. Positions Leu20 to Gln306 constitute an ABC transmembrane type-1 domain. The Cytoplasmic segment spans residues Asn58–Arg136. A helical transmembrane segment spans residues Val137–Phe157. Topologically, residues Leu158 to Thr161 are periplasmic. The helical transmembrane segment at Leu162–Tyr182 threads the bilayer. Residues Arg183–Ala249 lie on the Cytoplasmic side of the membrane. Residues Ile250–Val270 form a helical membrane-spanning segment. The Periplasmic segment spans residues Gly271 to Pro276. The helical transmembrane segment at Gly277–Val297 threads the bilayer. Residues Thr298–Leu573 are Cytoplasmic-facing. Residues Leu339–Gly572 enclose the ABC transporter domain. Residue Gly373 to Ser380 coordinates ATP.

The protein belongs to the ABC transporter superfamily. Cysteine exporter (TC 3.A.1.129.1) family. As to quaternary structure, forms a heterodimer with CydD.

The protein localises to the cell inner membrane. It carries out the reaction L-cysteine(in) + ATP + H2O = L-cysteine(out) + ADP + phosphate + H(+). The catalysed reaction is glutathione(in) + ATP + H2O = glutathione(out) + ADP + phosphate + H(+). Its activity is regulated as follows. ATPase activity is stimulated by various thiol compounds. The presence of heme leads to a further enhancement of thiol-stimulated ATPase activity, although a large excess of heme inhibits activity. Glutathione transport is inhibited by sodium orthovanadate, an inhibitor of ABC-type transport systems, but not by the proton ionophore carbonyl cyanide m-chlorophenylhydrazone (CCCP). Part of the ABC transporter complex CydDC that exports the reduced low-molecular-weight thiols cysteine and glutathione to the periplasm. Export of these thiol-containing redox-active molecules may be crucial for redox homeostasis in the periplasm, permitting correct assembly of various respiratory complexes and formation of correct disulfide bonds in periplasmic and secreted proteins. CydC contains transmembrane domains (TMD), which form a pore in the inner membrane, and an ATP-binding domain (NBD), which is responsible for energy generation. Required for the assembly of functional cytochrome bd-type quinol oxidases and periplasmic c-type cytochromes. Overexpression of CydDC under anaerobic conditions also results in the formation of a heme biosynthesis-derived pigment, P-574. CydDC binds heme b, but heme is probably not transported by the complex and instead has a role in regulating ATPase activity. In terms of biological role, conversely, a more recent study suggests an alternative function of CydDC: authors suggest that CydDC does not mediate the export of L-cysteine but rather reduces cytoplasmic L-cystine to L-cysteine. The principle function of CydDC would be to maintain the reduced state of cytoplasmic L-cysteine, thereby providing an important connection between sulfur metabolism, oxidative stress and resistance to antibiotics. The chain is Glutathione/L-cysteine transport system ATP-binding/permease protein CydC from Escherichia coli (strain K12).